The sequence spans 320 residues: Cytochrome f (320 aa).

A signal peptide spans 1–35; it reads MNFFTHKKNNFGSFVTIFSFLVALGVTNLTPAAEA. Residues tyrosine 36, cysteine 56, cysteine 59, and histidine 60 each contribute to the heme site. The chain crosses the membrane as a helical span at residues 286-306; it reads IQGLLVFFATVLFAQVLLVLK.

The protein belongs to the cytochrome f family. The 4 large subunits of the cytochrome b6-f complex are cytochrome b6, subunit IV (17 kDa polypeptide, petD), cytochrome f and the Rieske protein, while the 4 small subunits are PetG, PetL, PetM and PetN. The complex functions as a dimer. Heme is required as a cofactor.

Its subcellular location is the plastid. It is found in the chloroplast thylakoid membrane. Functionally, component of the cytochrome b6-f complex, which mediates electron transfer between photosystem II (PSII) and photosystem I (PSI), cyclic electron flow around PSI, and state transitions. This Tetradesmus obliquus (Green alga) protein is Cytochrome f.